Reading from the N-terminus, the 166-residue chain is Myosin regulatory light chain 2, ventricular/cardiac muscle isoform (166 aa).

Ser-2 is modified (n,N,N-trimethylserine). Asn-14 is modified (deamidated asparagine). Ser-19 is modified (phosphoserine). 3 consecutive EF-hand domains span residues 24 to 59, 94 to 129, and 130 to 165; these read TQIQEFKEAFTIMDQNRDGFIDKNDLRDTFAALGRV, DPEETILNAFKVFDPEGKGVLKADYIKEMLTTQAER, and FSKEEIDQMFAAFPPDVTGNLDYKNLVHIITHGEEK. The Ca(2+) site is built by Asp-37, Asn-39, Asp-41, and Asp-48. Position 52 is a phosphothreonine (Thr-52).

Myosin is a hexamer of 2 heavy chains and 4 light chains. Interacts with MYOC. N-terminus is methylated by METTL11A/NTM1. In terms of processing, phosphorylated by MYLK3 and MYLK2; promotes cardiac muscle contraction and function. Dephosphorylated by PPP1CB complexed to PPP1R12B. The phosphorylated form in adult is expressed as gradients across the heart from endocardium (low phosphorylation) to epicardium (high phosphorylation); regulates cardiac torsion and workload distribution.

Its subcellular location is the cytoplasm. The protein localises to the myofibril. The protein resides in the sarcomere. It is found in the a band. In terms of biological role, contractile protein that plays a role in heart development and function. Following phosphorylation, plays a role in cross-bridge cycling kinetics and cardiac muscle contraction by increasing myosin lever arm stiffness and promoting myosin head diffusion; as a consequence of the increase in maximum contraction force and calcium sensitivity of contraction force. These events altogether slow down myosin kinetics and prolong duty cycle resulting in accumulated myosins being cooperatively recruited to actin binding sites to sustain thin filament activation as a means to fine-tune myofilament calcium sensitivity to force. During cardiogenesis plays an early role in cardiac contractility by promoting cardiac myofibril assembly. This chain is Myosin regulatory light chain 2, ventricular/cardiac muscle isoform, found in Bos taurus (Bovine).